The chain runs to 431 residues: Serine hydroxymethyltransferase (431 aa).

Residues Leu-128 and 132 to 134 (GHL) each bind (6S)-5,6,7,8-tetrahydrofolate. At Lys-237 the chain carries N6-(pyridoxal phosphate)lysine.

Belongs to the SHMT family. In terms of assembly, homodimer. The cofactor is pyridoxal 5'-phosphate.

It localises to the cytoplasm. The enzyme catalyses (6R)-5,10-methylene-5,6,7,8-tetrahydrofolate + glycine + H2O = (6S)-5,6,7,8-tetrahydrofolate + L-serine. It functions in the pathway one-carbon metabolism; tetrahydrofolate interconversion. The protein operates within amino-acid biosynthesis; glycine biosynthesis; glycine from L-serine: step 1/1. Functionally, catalyzes the reversible interconversion of serine and glycine with tetrahydrofolate (THF) serving as the one-carbon carrier. This reaction serves as the major source of one-carbon groups required for the biosynthesis of purines, thymidylate, methionine, and other important biomolecules. Also exhibits THF-independent aldolase activity toward beta-hydroxyamino acids, producing glycine and aldehydes, via a retro-aldol mechanism. The sequence is that of Serine hydroxymethyltransferase from Ruegeria sp. (strain TM1040) (Silicibacter sp.).